Consider the following 251-residue polypeptide: tRNA (guanine-N(1)-)-methyltransferase (251 aa).

S-adenosyl-L-methionine contacts are provided by residues G122 and 142-147; that span reads IGDYVL. A disordered region spans residues 226–251; it reads RARRPDLFATRPQPNRQKPPKNTTDG. Polar residues predominate over residues 237-251; it reads PQPNRQKPPKNTTDG.

Belongs to the RNA methyltransferase TrmD family. Homodimer.

The protein localises to the cytoplasm. It carries out the reaction guanosine(37) in tRNA + S-adenosyl-L-methionine = N(1)-methylguanosine(37) in tRNA + S-adenosyl-L-homocysteine + H(+). Its function is as follows. Specifically methylates guanosine-37 in various tRNAs. This chain is tRNA (guanine-N(1)-)-methyltransferase, found in Rhodopseudomonas palustris (strain BisB18).